Here is a 139-residue protein sequence, read N- to C-terminus: Transcription antitermination protein NusB (139 aa).

This sequence belongs to the NusB family.

Involved in transcription antitermination. Required for transcription of ribosomal RNA (rRNA) genes. Binds specifically to the boxA antiterminator sequence of the ribosomal RNA (rrn) operons. This Lactiplantibacillus plantarum (strain ATCC BAA-793 / NCIMB 8826 / WCFS1) (Lactobacillus plantarum) protein is Transcription antitermination protein NusB.